The sequence spans 313 residues: tRNA-cytidine(32) 2-sulfurtransferase (313 aa).

The PP-loop motif signature appears at 47-52 (SGGKDS). 3 residues coordinate [4Fe-4S] cluster: Cys-122, Cys-125, and Cys-213.

This sequence belongs to the TtcA family. Homodimer. It depends on Mg(2+) as a cofactor. Requires [4Fe-4S] cluster as cofactor.

It localises to the cytoplasm. It carries out the reaction cytidine(32) in tRNA + S-sulfanyl-L-cysteinyl-[cysteine desulfurase] + AH2 + ATP = 2-thiocytidine(32) in tRNA + L-cysteinyl-[cysteine desulfurase] + A + AMP + diphosphate + H(+). The protein operates within tRNA modification. In terms of biological role, catalyzes the ATP-dependent 2-thiolation of cytidine in position 32 of tRNA, to form 2-thiocytidine (s(2)C32). The sulfur atoms are provided by the cysteine/cysteine desulfurase (IscS) system. The chain is tRNA-cytidine(32) 2-sulfurtransferase from Yersinia enterocolitica serotype O:8 / biotype 1B (strain NCTC 13174 / 8081).